We begin with the raw amino-acid sequence, 250 residues long: Adenosylcobinamide-GDP ribazoletransferase (250 aa).

A run of 6 helical transmembrane segments spans residues 33–53, 63–83, 109–129, 137–157, 180–200, and 203–223; these read IASYFPIVGIVIGGILSLLYI, IVMTFIVAFSYVLTGAMHIDG, LGTNGVLAAIFIVVLKILFLT, LTALLITPIIGRLSIVFSMMI, FAIAFVISIATSYFILPLAVF, and ILTISLFVTYIVSKYISLRIG.

Belongs to the CobS family. The cofactor is Mg(2+).

The protein localises to the cell membrane. The enzyme catalyses alpha-ribazole + adenosylcob(III)inamide-GDP = adenosylcob(III)alamin + GMP + H(+). It catalyses the reaction alpha-ribazole 5'-phosphate + adenosylcob(III)inamide-GDP = adenosylcob(III)alamin 5'-phosphate + GMP + H(+). It participates in cofactor biosynthesis; adenosylcobalamin biosynthesis; adenosylcobalamin from cob(II)yrinate a,c-diamide: step 7/7. Its function is as follows. Joins adenosylcobinamide-GDP and alpha-ribazole to generate adenosylcobalamin (Ado-cobalamin). Also synthesizes adenosylcobalamin 5'-phosphate from adenosylcobinamide-GDP and alpha-ribazole 5'-phosphate. This Thermoanaerobacter pseudethanolicus (strain ATCC 33223 / 39E) (Clostridium thermohydrosulfuricum) protein is Adenosylcobinamide-GDP ribazoletransferase.